An 817-amino-acid chain; its full sequence is DNA mismatch repair protein MutS (817 aa).

604–611 (GPNMSGKS) contributes to the ATP binding site.

It belongs to the DNA mismatch repair MutS family.

In terms of biological role, this protein is involved in the repair of mismatches in DNA. It is possible that it carries out the mismatch recognition step. This protein has a weak ATPase activity. This chain is DNA mismatch repair protein MutS, found in Petrotoga mobilis (strain DSM 10674 / SJ95).